Consider the following 398-residue polypeptide: Selection and upkeep of intraepithelial T-cells protein 8 (398 aa).

The N-terminal stretch at M1–S25 is a signal peptide. One can recognise an Ig-like V-type domain in the interval E26–T141. Over E26–L244 the chain is Extracellular. C49 and C123 are disulfide-bonded. N92 and N139 each carry an N-linked (GlcNAc...) asparagine glycan. Positions A142–I233 constitute an Ig-like C1-type domain. A disulfide bridge connects residues C163 and C217. Residues W245 to I265 form a helical membrane-spanning segment. Over N266–S288 the chain is Cytoplasmic. The chain crosses the membrane as a helical span at residues W289–P309. At H310–L331 the chain is on the extracellular side. The helical transmembrane segment at L332–I352 threads the bilayer. Topologically, residues K353–K398 are cytoplasmic.

It belongs to the SKINT family. As to expression, expressed in skin, thymus, testis and, to a lower extent, bladder, brain, heart, kidney, mammary gland, small intestine and uterus.

It localises to the membrane. Its function is as follows. May act by engaging a cell surface molecule on immature T-cells in the embryonic thymus. The chain is Selection and upkeep of intraepithelial T-cells protein 8 (Skint8) from Mus musculus (Mouse).